Reading from the N-terminus, the 320-residue chain is Heterogeneous nuclear ribonucleoprotein A1 (320 aa).

Methionine 1 carries the post-translational modification N-acetylmethionine. Serine 2 is modified (N-acetylserine; in Heterogeneous nuclear ribonucleoprotein A1, N-terminally processed). Serine 2 is modified (phosphoserine). An N6-acetyllysine; alternate modification is found at lysine 3. Lysine 3 is covalently cross-linked (Glycyl lysine isopeptide (Lys-Gly) (interchain with G-Cter in SUMO2); alternate). Phosphoserine is present on residues serine 4 and serine 6. Positions 4-94 (SESPKEPEQL…EPKRAVSRED (91 aa)) are globular A domain. Lysine 8 is covalently cross-linked (Glycyl lysine isopeptide (Lys-Gly) (interchain with G-Cter in SUMO2)). 2 RRM domains span residues 14-97 (RKLF…DSQR) and 105-184 (KKIF…LCKQ). Serine 22 carries the post-translational modification Phosphoserine. Residue lysine 78 forms a Glycyl lysine isopeptide (Lys-Gly) (interchain with G-Cter in SUMO2) linkage. The segment at 95-185 (SQRPGAHLTV…EVRKALCKQE (91 aa)) is globular B domain. A Glycyl lysine isopeptide (Lys-Gly) (interchain with G-Cter in SUMO) cross-link involves residue lysine 113. Residues lysine 179 and lysine 183 each participate in a glycyl lysine isopeptide (Lys-Gly) (interchain with G-Cter in SUMO2) cross-link. The interval 188 to 216 (SASSSQRGRSGSGNFGGGRGGGFGGNDNF) is disordered. Phosphoserine; by MKNK2 is present on serine 192. Arginine 194 is modified (asymmetric dimethylarginine; alternate). Arginine 194 is modified (dimethylated arginine; alternate). Arginine 194 carries the post-translational modification Omega-N-methylarginine; alternate. A compositionally biased stretch (gly residues) spans 197–216 (SGSGNFGGGRGGGFGGNDNF). A Phosphoserine modification is found at serine 199. An asymmetric dimethylarginine; alternate mark is found at arginine 206, arginine 218, arginine 225, and arginine 232. Position 206 is a dimethylated arginine; alternate (arginine 206). Omega-N-methylarginine; alternate is present on residues arginine 206, arginine 218, arginine 225, and arginine 232. The segment at 218 to 240 (RGGNFSGRGGFGGSRGGGGYGGS) is RNA-binding RGG-box. The residue at position 225 (arginine 225) is a Dimethylated arginine; alternate. Positions 268-305 (NQSSNFGPMKGGNFGGRSSGPYGGGGQYFAKPRNQGGY) are nuclear targeting sequence. Residues 271 to 320 (SNFGPMKGGNFGGRSSGPYGGGGQYFAKPRNQGGYGGSSSSSSYGSGRRF) are disordered. Gly residues predominate over residues 276–294 (MKGGNFGGRSSGPYGGGGQ). Arginine 284 carries the omega-N-methylarginine modification. Serine 285 is subject to Phosphoserine. The residue at position 298 (lysine 298) is an N6-acetyllysine; alternate. Lysine 298 is covalently cross-linked (Glycyl lysine isopeptide (Lys-Gly) (interchain with G-Cter in SUMO2); alternate). Arginine 300 is subject to Omega-N-methylarginine. Over residues 308–320 (SSSSSSYGSGRRF) the composition is skewed to low complexity. The residue at position 309 (serine 309) is a Phosphoserine. Serine 310, serine 311, and serine 312 each carry phosphoserine; by MKNK2. Serine 313 and serine 316 each carry phosphoserine. Omega-N-methylarginine is present on arginine 318.

Identified in the spliceosome C complex. Identified in a IGF2BP1-dependent mRNP granule complex containing untranslated mRNAs. Interacts with SEPT6. Interacts with C9orf72. Interacts with KHDRBS1. Interacts with UBQLN2. Interacts with PPIA/CYPA. Post-translationally, sumoylated.

It is found in the nucleus. It localises to the cytoplasm. Its function is as follows. Involved in the packaging of pre-mRNA into hnRNP particles, transport of poly(A) mRNA from the nucleus to the cytoplasm and modulation of splice site selection. Plays a role in the splicing of pyruvate kinase PKM by binding repressively to sequences flanking PKM exon 9, inhibiting exon 9 inclusion and resulting in exon 10 inclusion and production of the PKM M2 isoform. Binds to the IRES and thereby inhibits the translation of the apoptosis protease activating factor APAF1. May bind to specific miRNA hairpins. The protein is Heterogeneous nuclear ribonucleoprotein A1 (Hnrnpa1) of Rattus norvegicus (Rat).